A 230-amino-acid chain; its full sequence is MAVSNSLTISPRKLRSDLYSYSYQNNSKTPLVISVLSSLIDRTLTRNERISRRALPSSGAGGKTQIFDCREIPDMTIQSYLGRIFRYTKAGPSVYVVAYVYIDRFCQTNPGFRISLTNVHRLLITTIMIASKYVEDLNYRNSYFAKVGGLETEDLNKLELEFLFLMGFKLHVNVSVFESYCCHLEREVSFGGGYQIEKALRCAEEIKSRQMIIQDPKHHHHHHQLARILL.

It belongs to the cyclin family. Cyclin U/P subfamily. Interacts with CDKA-1. In terms of tissue distribution, expressed in roots and stems. Expressed in the shoot apex, leaf primordia and young leaves.

This is Cyclin-U2-2 (CYCU2-2) from Arabidopsis thaliana (Mouse-ear cress).